A 456-amino-acid chain; its full sequence is Bifunctional protein GlmU (456 aa).

A pyrophosphorylase region spans residues 1-229; sequence MLNNAMSVVI…LSEVEGVNNR (229 aa). UDP-N-acetyl-alpha-D-glucosamine-binding positions include 11 to 14, lysine 25, glutamine 76, 81 to 82, 103 to 105, glycine 140, glutamate 154, asparagine 169, and asparagine 227; these read LAAG, GT, and YGD. Residue aspartate 105 participates in Mg(2+) binding. Mg(2+) is bound at residue asparagine 227. Positions 230–250 are linker; sequence LQLSRLERVYQSEQAEKLLLA. Positions 251 to 456 are N-acetyltransferase; it reads GVMLRDPARF…EGWRRPVKKK (206 aa). Residues arginine 333 and lysine 351 each coordinate UDP-N-acetyl-alpha-D-glucosamine. The active-site Proton acceptor is the histidine 363. UDP-N-acetyl-alpha-D-glucosamine-binding residues include tyrosine 366 and asparagine 377. Acetyl-CoA contacts are provided by residues alanine 380, 386 to 387, serine 405, alanine 423, and arginine 440; that span reads NY.

The protein in the N-terminal section; belongs to the N-acetylglucosamine-1-phosphate uridyltransferase family. It in the C-terminal section; belongs to the transferase hexapeptide repeat family. Homotrimer. The cofactor is Mg(2+).

Its subcellular location is the cytoplasm. It carries out the reaction alpha-D-glucosamine 1-phosphate + acetyl-CoA = N-acetyl-alpha-D-glucosamine 1-phosphate + CoA + H(+). The catalysed reaction is N-acetyl-alpha-D-glucosamine 1-phosphate + UTP + H(+) = UDP-N-acetyl-alpha-D-glucosamine + diphosphate. Its pathway is nucleotide-sugar biosynthesis; UDP-N-acetyl-alpha-D-glucosamine biosynthesis; N-acetyl-alpha-D-glucosamine 1-phosphate from alpha-D-glucosamine 6-phosphate (route II): step 2/2. It functions in the pathway nucleotide-sugar biosynthesis; UDP-N-acetyl-alpha-D-glucosamine biosynthesis; UDP-N-acetyl-alpha-D-glucosamine from N-acetyl-alpha-D-glucosamine 1-phosphate: step 1/1. The protein operates within bacterial outer membrane biogenesis; LPS lipid A biosynthesis. Catalyzes the last two sequential reactions in the de novo biosynthetic pathway for UDP-N-acetylglucosamine (UDP-GlcNAc). The C-terminal domain catalyzes the transfer of acetyl group from acetyl coenzyme A to glucosamine-1-phosphate (GlcN-1-P) to produce N-acetylglucosamine-1-phosphate (GlcNAc-1-P), which is converted into UDP-GlcNAc by the transfer of uridine 5-monophosphate (from uridine 5-triphosphate), a reaction catalyzed by the N-terminal domain. In Shigella sonnei (strain Ss046), this protein is Bifunctional protein GlmU.